We begin with the raw amino-acid sequence, 263 residues long: 3-deoxy-manno-octulosonate cytidylyltransferase (263 aa).

This sequence belongs to the KdsB family.

It localises to the cytoplasm. The catalysed reaction is 3-deoxy-alpha-D-manno-oct-2-ulosonate + CTP = CMP-3-deoxy-beta-D-manno-octulosonate + diphosphate. It functions in the pathway nucleotide-sugar biosynthesis; CMP-3-deoxy-D-manno-octulosonate biosynthesis; CMP-3-deoxy-D-manno-octulosonate from 3-deoxy-D-manno-octulosonate and CTP: step 1/1. The protein operates within bacterial outer membrane biogenesis; lipopolysaccharide biosynthesis. Functionally, activates KDO (a required 8-carbon sugar) for incorporation into bacterial lipopolysaccharide in Gram-negative bacteria. In Burkholderia cenocepacia (strain HI2424), this protein is 3-deoxy-manno-octulosonate cytidylyltransferase.